The following is a 380-amino-acid chain: Cytochrome b (380 aa).

4 consecutive transmembrane segments (helical) span residues 33 to 53, 77 to 98, 113 to 133, and 178 to 198; these read FGSL…FLAM, WLIR…FIHV, WNIG…GYVL, and FFAF…VHLL. Heme b-binding residues include His83 and His97. Heme b is bound by residues His182 and His196. Residue His201 participates in a ubiquinone binding. Helical transmembrane passes span 226-246, 288-308, 320-340, and 347-367; these read IKDL…VLFF, LGGV…PLLN, LTQF…WIGG, and FTTI…VLMP.

This sequence belongs to the cytochrome b family. The cytochrome bc1 complex contains 11 subunits: 3 respiratory subunits (MT-CYB, CYC1 and UQCRFS1), 2 core proteins (UQCRC1 and UQCRC2) and 6 low-molecular weight proteins (UQCRH/QCR6, UQCRB/QCR7, UQCRQ/QCR8, UQCR10/QCR9, UQCR11/QCR10 and a cleavage product of UQCRFS1). This cytochrome bc1 complex then forms a dimer. Heme b is required as a cofactor.

The protein resides in the mitochondrion inner membrane. Its function is as follows. Component of the ubiquinol-cytochrome c reductase complex (complex III or cytochrome b-c1 complex) that is part of the mitochondrial respiratory chain. The b-c1 complex mediates electron transfer from ubiquinol to cytochrome c. Contributes to the generation of a proton gradient across the mitochondrial membrane that is then used for ATP synthesis. The protein is Cytochrome b (MT-CYB) of Thomasomys notatus (Distinguished oldfield mouse).